Consider the following 221-residue polypeptide: Antigenic protein SchS34 (221 aa).

N-linked (GlcNAc...) asparagine glycosylation is found at asparagine 27, asparagine 69, asparagine 141, and asparagine 215.

As to expression, expressed in the mycelium (at protein level).

Its subcellular location is the secreted. The protein localises to the spore. The protein resides in the spore wall. It localises to the cytoplasm. This Stachybotrys chartarum (Toxic black mold) protein is Antigenic protein SchS34.